A 485-amino-acid polypeptide reads, in one-letter code: Mitochondria-eating protein (485 aa).

The stretch at 112 to 210 (TSHERELNEV…SILSSESSIL (99 aa)) forms a coiled coil. 2 stretches are compositionally biased toward low complexity: residues 214–241 (LSRS…SPTS) and 471–485 (RSRS…TPRF). Disordered regions lie at residues 214–244 (LSRS…SAKL) and 451–485 (RSRS…TPRF).

Belongs to the MIEAP family.

Its subcellular location is the cytoplasm. It localises to the mitochondrion outer membrane. The protein localises to the mitochondrion matrix. In terms of biological role, key regulator of mitochondrial quality that mediates the repairing or degradation of unhealthy mitochondria in response to mitochondrial damage. Mediator of mitochondrial protein catabolic process (also named MALM) by mediating the degradation of damaged proteins inside mitochondria by promoting the accumulation in the mitochondrial matrix of hydrolases that are characteristic of the lysosomal lumen. Also involved in mitochondrion degradation of damaged mitochondria by promoting the formation of vacuole-like structures (named MIV), which engulf and degrade unhealthy mitochondria by accumulating lysosomes. Binds cardiolipin. May form molecular condensates (non-membrane-bounded organelles) within mitochondria that compartmentalize and promote cardiolipin metabolism. The polypeptide is Mitochondria-eating protein (spata18) (Xenopus laevis (African clawed frog)).